The sequence spans 955 residues: Probable trehalose monomycolate exporter MmpL3 (955 aa).

The Cytoplasmic portion of the chain corresponds to 1–13 (MFAWWGRTVYRYR). A helical membrane pass occupies residues 14–34 (FIVIGITVALCLCGGVFGLSL). The Periplasmic segment spans residues 35 to 190 (GKHVTQSGFY…TIATDQRRME (156 aa)). Residue 40–44 (QSGFY) coordinates a 1,2-diacylglycero-3-phosphoethanolamine. Residues 191–213 (VLALPLVAVVLFLVFGGVIAACL) form a helical membrane-spanning segment. The Cytoplasmic segment spans residues 214 to 219 (PVMVGG). Residues 220–236 (LSIAGALGILRFIALFG) form a helical membrane-spanning segment. Residues 237 to 244 (PVHFFAQP) lie on the Periplasmic side of the membrane. A helical transmembrane segment spans residues 245–262 (VVSLIGLGIAVDYGLFVV). Residues 263-291 (SRFREEIAEGYDTEAAVRRTVMTAGRTVT) are Cytoplasmic-facing. The helical transmembrane segment at 292 to 312 (FSAVLIAASGASLLLLPQGFV) threads the bilayer. Residues 313 to 319 (KSLTYAL) are Periplasmic-facing. Residues 320–340 (IAAVTLAALLSITLLPACLAI) traverse the membrane as a helical segment. The Cytoplasmic portion of the chain corresponds to 341–401 (LAKHVDALGV…KLVNFVMKRP (61 aa)). The helical transmembrane segment at 402-422 (LVFAIPIVIGMILLVIPLGNL) threads the bilayer. Over 423-567 (SFGGMSEKYL…HSLVAQAPLM (145 aa)) the chain is Periplasmic. Residues 568–588 (VIMLITTTMLLMFLAFGSFVL) traverse the membrane as a helical segment. Topologically, residues 589 to 591 (PIK) are cytoplasmic. The chain crosses the membrane as a helical span at residues 592–612 (AAVMSALTLGSTMGILTWIFV). The Periplasmic portion of the chain corresponds to 613–621 (DGHLSKWLN). Residues 622–642 (FTPTPLMVVIIALVVAVGYGL) form a helical membrane-spanning segment. Topologically, residues 643-678 (ATDYEVFLVSRMVEARAESMSTQEAVRIGTASTGRL) are cytoplasmic. A helical membrane pass occupies residues 679–699 (ITAAALVLAVVAGSFVFSDLV). Residues 700 to 703 (MMKY) are Periplasmic-facing. Residues 704–724 (LAFGLMAALLLDATVVRMFLV) traverse the membrane as a helical segment. Residues 725–955 (PSVMKLLGDD…QDLLRREGRL (231 aa)) are Cytoplasmic-facing. The interval 759-955 (ERRRPTVSGR…QDLLRREGRL (197 aa)) is disordered. 2 stretches are compositionally biased toward polar residues: residues 821–860 (GASTARIQMRPSQSVEATTTRLSVPGNAPTTAAVSSSQGV) and 890–902 (NRSSDNASETAEP).

The protein belongs to the resistance-nodulation-cell division (RND) (TC 2.A.6) family. MmpL subfamily.

The protein resides in the cell inner membrane. It localises to the cell septum. Its subcellular location is the cell tip. Its function is as follows. Transports trehalose monomycolate (TMM) to the cell wall. Flips TMM across the inner membrane. Membrane potential is not required for this function. Transports probably phosphatidylethanolamine (PE) as well. Contributes to membrane potential, cell wall composition, antibiotic susceptibility and fitness. The polypeptide is Probable trehalose monomycolate exporter MmpL3 (mmpL3) (Mycobacterium leprae (strain TN)).